A 106-amino-acid chain; its full sequence is MIPGEVITPETDIELNVGRETLKVVVANLGDRPIQVGSHFHFYEANDALQFDREAVKGFRLNIAAGTAIRFEPGQSREVELVALAGKREVYGFAGRVMGRLDENVD.

Belongs to the urease beta subunit family. Heterotrimer of UreA (gamma), UreB (beta) and UreC (alpha) subunits. Three heterotrimers associate to form the active enzyme.

The protein localises to the cytoplasm. The catalysed reaction is urea + 2 H2O + H(+) = hydrogencarbonate + 2 NH4(+). The protein operates within nitrogen metabolism; urea degradation; CO(2) and NH(3) from urea (urease route): step 1/1. The chain is Urease subunit beta from Acinetobacter baumannii (strain ATCC 17978 / DSM 105126 / CIP 53.77 / LMG 1025 / NCDC KC755 / 5377).